The sequence spans 115 residues: NADH-ubiquinone oxidoreductase chain 3 (115 aa).

3 helical membrane passes run L3 to W23, F55 to I75, and I84 to Y104.

This sequence belongs to the complex I subunit 3 family. In terms of assembly, core subunit of respiratory chain NADH dehydrogenase (Complex I) which is composed of 45 different subunits. Interacts with TMEM186. Interacts with TMEM242.

It is found in the mitochondrion inner membrane. The catalysed reaction is a ubiquinone + NADH + 5 H(+)(in) = a ubiquinol + NAD(+) + 4 H(+)(out). Its function is as follows. Core subunit of the mitochondrial membrane respiratory chain NADH dehydrogenase (Complex I) which catalyzes electron transfer from NADH through the respiratory chain, using ubiquinone as an electron acceptor. Essential for the catalytic activity of complex I. This is NADH-ubiquinone oxidoreductase chain 3 from Scotinomys teguina (Alston's brown mouse).